A 229-amino-acid polypeptide reads, in one-letter code: Adenylate kinase (229 aa).

Glycine 10–threonine 15 contacts ATP. An NMP region spans residues glutamate 30–valine 59. Residues serine 31, arginine 36, glutamate 57–valine 59, glycine 84–arginine 87, and glutamine 91 contribute to the AMP site. Positions glycine 125 to aspartate 164 are LID. ATP is bound at residue arginine 126. The AMP site is built by arginine 161 and arginine 173. Residue asparagine 209 coordinates ATP.

This sequence belongs to the adenylate kinase family. Monomer.

It is found in the cytoplasm. It catalyses the reaction AMP + ATP = 2 ADP. Its pathway is purine metabolism; AMP biosynthesis via salvage pathway; AMP from ADP: step 1/1. Catalyzes the reversible transfer of the terminal phosphate group between ATP and AMP. Plays an important role in cellular energy homeostasis and in adenine nucleotide metabolism. The chain is Adenylate kinase from Lawsonia intracellularis (strain PHE/MN1-00).